We begin with the raw amino-acid sequence, 466 residues long: 3-isopropylmalate dehydratase large subunit (466 aa).

The [4Fe-4S] cluster site is built by cysteine 347, cysteine 407, and cysteine 410.

It belongs to the aconitase/IPM isomerase family. LeuC type 1 subfamily. In terms of assembly, heterodimer of LeuC and LeuD. It depends on [4Fe-4S] cluster as a cofactor.

The enzyme catalyses (2R,3S)-3-isopropylmalate = (2S)-2-isopropylmalate. The protein operates within amino-acid biosynthesis; L-leucine biosynthesis; L-leucine from 3-methyl-2-oxobutanoate: step 2/4. In terms of biological role, catalyzes the isomerization between 2-isopropylmalate and 3-isopropylmalate, via the formation of 2-isopropylmaleate. This chain is 3-isopropylmalate dehydratase large subunit, found in Serratia proteamaculans (strain 568).